The following is a 383-amino-acid chain: Probable indole-3-pyruvate monooxygenase YUCCA10 (383 aa).

9-14 (GAGPAG) lines the FAD pocket. 177-182 (GGGNSG) lines the NADP(+) pocket.

The protein belongs to the FMO family. It depends on FAD as a cofactor.

The catalysed reaction is indole-3-pyruvate + NADPH + O2 + H(+) = (indol-3-yl)acetate + CO2 + NADP(+) + H2O. It participates in plant hormone metabolism; auxin biosynthesis. In terms of biological role, involved in auxin biosynthesis. The polypeptide is Probable indole-3-pyruvate monooxygenase YUCCA10 (YUC10) (Arabidopsis thaliana (Mouse-ear cress)).